Consider the following 115-residue polypeptide: U3-lycotoxin-Ls1s (115 aa).

Positions 1 to 20 (MKFVLLFGVFLLTLFSYSSS) are cleaved as a signal peptide. Positions 21-44 (EMLDDFDQADEDELLSLIEKEEAR) are excised as a propeptide. Disulfide bonds link Cys-48–Cys-63, Cys-55–Cys-72, Cys-62–Cys-87, and Cys-74–Cys-85.

This sequence belongs to the neurotoxin 19 (CSTX) family. 01 subfamily. In terms of tissue distribution, expressed by the venom gland.

The protein localises to the secreted. The protein is U3-lycotoxin-Ls1s of Lycosa singoriensis (Wolf spider).